We begin with the raw amino-acid sequence, 561 residues long: Zinc finger protein 37A (561 aa).

The KRAB domain occupies 8-79 (VSFRDVTVGF…EEKFPSQSHL (72 aa)). The C2H2-type 1; degenerate zinc finger occupies 146 to 168 (FEYNECGKAFPENSLFLVHKRGY). The C2H2-type 2; degenerate zinc finger occupies 243–265 (IEYNECGTFFSEKLVLHLQQRTH). 10 C2H2-type zinc fingers span residues 271–293 (YECHECGKTFTQKSAHTRHQRTH), 299–321 (YECHECGKTFYKNSDLIKHQRIH), 327–349 (YGCHECGKSFSEKSTLTQHQRTH), 355–377 (YECHECGKTFSFKSVLTVHQKTH), 383–405 (YECYACGKAFLRKSDLIKHQRIH), 411–433 (YECNECGKSFSEKSTLTKHLRTH), 439–461 (YECIQCGKFFCYYSGFTEHLRRH), 467–489 (FGCNECGKTFRQKSALIVHQRTH), 495–517 (YGCNQCGKSFCVKSKLIAHHRTH), and 523–545 (YECNVCGKSFYVKSKLTVHQRIH).

Belongs to the krueppel C2H2-type zinc-finger protein family.

It localises to the nucleus. Its function is as follows. May be involved in transcriptional regulation. The polypeptide is Zinc finger protein 37A (ZNF37A) (Homo sapiens (Human)).